A 424-amino-acid polypeptide reads, in one-letter code: Serine hydroxymethyltransferase 2 (424 aa).

Residues leucine 125 and 129–131 (GHL) contribute to the (6S)-5,6,7,8-tetrahydrofolate site. Lysine 234 carries the post-translational modification N6-(pyridoxal phosphate)lysine. Glutamate 250 lines the (6S)-5,6,7,8-tetrahydrofolate pocket.

This sequence belongs to the SHMT family. In terms of assembly, homodimer. Pyridoxal 5'-phosphate is required as a cofactor.

It localises to the cytoplasm. It carries out the reaction (6R)-5,10-methylene-5,6,7,8-tetrahydrofolate + glycine + H2O = (6S)-5,6,7,8-tetrahydrofolate + L-serine. Its pathway is one-carbon metabolism; tetrahydrofolate interconversion. It functions in the pathway amino-acid biosynthesis; glycine biosynthesis; glycine from L-serine: step 1/1. In terms of biological role, catalyzes the reversible interconversion of serine and glycine with tetrahydrofolate (THF) serving as the one-carbon carrier. This reaction serves as the major source of one-carbon groups required for the biosynthesis of purines, thymidylate, methionine, and other important biomolecules. Also exhibits THF-independent aldolase activity toward beta-hydroxyamino acids, producing glycine and aldehydes, via a retro-aldol mechanism. The sequence is that of Serine hydroxymethyltransferase 2 from Burkholderia mallei (strain ATCC 23344).